The primary structure comprises 284 residues: RNase adapter protein RapZ (284 aa).

Residue 8–15 (GRSGSGKS) coordinates ATP. 56-59 (DVRN) is a GTP binding site. The interval 266 to 284 (RSRGKNVQSRHRTLEKRKS) is RNA-binding.

The protein belongs to the RapZ-like family. RapZ subfamily. In terms of assembly, homotrimer.

Its function is as follows. Modulates the synthesis of GlmS, by affecting the processing and stability of the regulatory small RNA GlmZ. When glucosamine-6-phosphate (GlcN6P) concentrations are high in the cell, RapZ binds GlmZ and targets it to cleavage by RNase E. Consequently, GlmZ is inactivated and unable to activate GlmS synthesis. Under low GlcN6P concentrations, RapZ is sequestered and inactivated by an other regulatory small RNA, GlmY, preventing GlmZ degradation and leading to synthesis of GlmS. This Cronobacter sakazakii (strain ATCC BAA-894) (Enterobacter sakazakii) protein is RNase adapter protein RapZ.